We begin with the raw amino-acid sequence, 1791 residues long: 1-phosphatidylinositol-3-phosphate 5-kinase FAB1B (1791 aa).

The FYVE-type zinc finger occupies 39-105 (DQSCRVCYEC…VCNYCFRQWE (67 aa)). Residues Cys-45, Cys-48, Cys-61, Cys-64, Cys-69, Cys-72, Cys-97, and Cys-100 each contribute to the Zn(2+) site. Disordered regions lie at residues 166–186 (HGVSSMETSVTKQGKETSRRS), 279–370 (EQFQ…DRTT), 770–790 (SDLSGRSVPVDTPADKSNPIV), and 834–859 (QQNNEKPKETQSQKEEFPPSPSDHQS). The segment covering 279-293 (EQFQKKSEHDGRDEC) has biased composition (basic and acidic residues). Over residues 324-345 (PENEEDERESALFDEEDNEGDA) the composition is skewed to acidic residues. Residues 838-850 (EKPKETQSQKEEF) are compositionally biased toward basic and acidic residues. Residues 1077–1111 (EKGFRRRIGELEEVLQKEKAEFEENMQKILHREVN) adopt a coiled-coil conformation. Positions 1151–1164 (NSDDTKREENEKPP) are enriched in basic and acidic residues. The tract at residues 1151 to 1242 (NSDDTKREEN…DTSYPLENKV (92 aa)) is disordered. 2 stretches are compositionally biased toward polar residues: residues 1167–1188 (KSQTLPEMNAGTNSLLTGSEVN) and 1196–1206 (TGDTGSLNNVQ). Residues 1433–1758 (SELNIPRPVD…RFRKAMTTYF (326 aa)) enclose the PIPK domain. Residues 1769–1791 (NVVANNSKSDQPEETSQAGTQAE) form a disordered region. Residues 1771 to 1791 (VANNSKSDQPEETSQAGTQAE) show a composition bias toward polar residues.

Component of the PI(3,5)P2 regulatory complex at least composed of ATG18, SAC/FIG4, FAB1 and VAC14. The cofactor is Mg(2+). Mn(2+) serves as cofactor. In terms of tissue distribution, ubiquitous with highest expression levels in the root hair zone, pollen, and stamens.

Its subcellular location is the endosome membrane. It catalyses the reaction a 1,2-diacyl-sn-glycero-3-phospho-(1D-myo-inositol-3-phosphate) + ATP = a 1,2-diacyl-sn-glycero-3-phospho-(1D-myo-inositol-3,5-bisphosphate) + ADP + H(+). The PI(3,5)P2 regulatory complex regulates both the synthesis and turnover of phosphatidylinositol 3,5-bisphosphate (PtdIns(3,5)P2). Catalyzes the phosphorylation of phosphatidylinositol 3-phosphate on the fifth hydroxyl of the myo-inositol ring, to form phosphatidylinositol 3,5-bisphosphate. Plays an important role in maintenance of endomembrane homeostasis including endocytosis, vacuole formation, and vacuolar acidification processes. Required for development of viable pollen. Might mediate recycling of auxin transporters. This is 1-phosphatidylinositol-3-phosphate 5-kinase FAB1B (FAB1B) from Arabidopsis thaliana (Mouse-ear cress).